Consider the following 436-residue polypeptide: Glucose-1-phosphate adenylyltransferase (436 aa).

Alpha-D-glucose 1-phosphate-binding positions include Tyr112, Gly178, 193-194, and Ser211; that span reads EK.

This sequence belongs to the bacterial/plant glucose-1-phosphate adenylyltransferase family. In terms of assembly, homotetramer.

It catalyses the reaction alpha-D-glucose 1-phosphate + ATP + H(+) = ADP-alpha-D-glucose + diphosphate. It functions in the pathway glycan biosynthesis; glycogen biosynthesis. In terms of biological role, involved in the biosynthesis of ADP-glucose, a building block required for the elongation reactions to produce glycogen. Catalyzes the reaction between ATP and alpha-D-glucose 1-phosphate (G1P) to produce pyrophosphate and ADP-Glc. The chain is Glucose-1-phosphate adenylyltransferase from Histophilus somni (strain 129Pt) (Haemophilus somnus).